The sequence spans 201 residues: Small ribosomal subunit protein uS4c (201 aa).

The interval 14 to 43 is disordered; sequence RLGALPGLTSKRPRAGSDLRNQSRPGKKSQ. Residues 89-169 form the S4 RNA-binding domain; it reads MRLDNILFRL…LPKHLTFHTL (81 aa).

It belongs to the universal ribosomal protein uS4 family. Part of the 30S ribosomal subunit. Contacts protein S5. The interaction surface between S4 and S5 is involved in control of translational fidelity.

It localises to the plastid. Its subcellular location is the chloroplast. Functionally, one of the primary rRNA binding proteins, it binds directly to 16S rRNA where it nucleates assembly of the body of the 30S subunit. With S5 and S12 plays an important role in translational accuracy. The polypeptide is Small ribosomal subunit protein uS4c (rps4) (Gossypium hirsutum (Upland cotton)).